The sequence spans 180 residues: MNPAPNLVMVGPMGAGKSCIGRRLAERFGLEFVDVDQAIVEQVGSSIPAIFEQHGEARFRQHEAETLQALLEQDNKLISTGGGAVLDPRNRERICARGFVVYLHVSVPAQLTRLARDRNRPLLQRADREQVLHAMAAHRTPLYHQVADLSLETDHLSPAEATAQLVLRLAAQWRMSSNPA.

Position 14–19 (G14–C19) interacts with ATP. A Mg(2+)-binding site is contributed by S18. Substrate is bound by residues D36, R60, and G82. Residue R120 coordinates ATP. Residue R139 coordinates substrate.

It belongs to the shikimate kinase family. Monomer. Mg(2+) serves as cofactor.

The protein localises to the cytoplasm. It carries out the reaction shikimate + ATP = 3-phosphoshikimate + ADP + H(+). The protein operates within metabolic intermediate biosynthesis; chorismate biosynthesis; chorismate from D-erythrose 4-phosphate and phosphoenolpyruvate: step 5/7. In terms of biological role, catalyzes the specific phosphorylation of the 3-hydroxyl group of shikimic acid using ATP as a cosubstrate. This Xanthomonas axonopodis pv. citri (strain 306) protein is Shikimate kinase.